The following is a 342-amino-acid chain: GTPase Obg (342 aa).

An Obg domain is found at 1 to 159 (MQFIDQAQIE…KLLRLELKLL (159 aa)). The 171-residue stretch at 160-330 (AEVGIIGLPN…MLQEVWGILD (171 aa)) folds into the OBG-type G domain. Residues 166-173 (GLPNAGKS), 191-195 (FTTLI), 213-216 (DIPG), 280-283 (NKID), and 311-313 (SAV) each bind GTP. S173 and T193 together coordinate Mg(2+).

It belongs to the TRAFAC class OBG-HflX-like GTPase superfamily. OBG GTPase family. As to quaternary structure, monomer. Requires Mg(2+) as cofactor.

It localises to the cytoplasm. Functionally, an essential GTPase which binds GTP, GDP and possibly (p)ppGpp with moderate affinity, with high nucleotide exchange rates and a fairly low GTP hydrolysis rate. Plays a role in control of the cell cycle, stress response, ribosome biogenesis and in those bacteria that undergo differentiation, in morphogenesis control. This Nostoc sp. (strain PCC 7120 / SAG 25.82 / UTEX 2576) protein is GTPase Obg.